Reading from the N-terminus, the 375-residue chain is uncharacterized protein (375 aa).

It belongs to the IMPDH/GMPR family.

This is an uncharacterized protein from Mycobacterium tuberculosis (strain CDC 1551 / Oshkosh).